A 236-amino-acid polypeptide reads, in one-letter code: MSRYLLRDVQAVLRGVRKVAESSLKLETEKVSLRLGDFRSQPSLRSVPASLTSRSQAFSLQEIAARAGVVLRGVQQQFRNVTGVNAAPVVAFDNGSVLYSERIHSQSSQKQAPTTVPTGSVSNSPQPEGKANEAAERAKQFMNPPVAPMDPVDKNEFVAMPEMGRSNGNGENKQAADFMKNQGDTDMDSQYAPDSSKNTKSVPTKEIVAEDGSMSIEDIKKATQVTPGVAVKNEGV.

A mitochondrion-targeting transit peptide spans 1–73; the sequence is MSRYLLRDVQ…AARAGVVLRG (73 aa). Disordered stretches follow at residues 102-135 and 165-209; these read RIHS…NEAA and RSNG…EIVA. Composition is skewed to polar residues over residues 105-126 and 192-202; these read SQSS…NSPQ and APDSSKNTKSV. An MAHS motif motif is present at residues 126-143; the sequence is QPEGKANEAAERAKQFMN.

The protein resides in the mitochondrion. Functionally, mitochondrial heat soluble protein acting as a molecular shield in water-deficient condition. The protein is Mitochondrial-abundant heat soluble protein of Ramazzottius varieornatus (Water bear).